The sequence spans 615 residues: Sodium-dependent neutral amino acid transporter B(0)AT3 (615 aa).

Topologically, residues 1-26 are cytoplasmic; the sequence is MAQASGMDPLVDIEDERPKWDNKLQY. The helical transmembrane segment at 27–47 threads the bilayer; sequence LLSCIGFAVGLGNIWRFPYLC. Over 48–52 the chain is Extracellular; that stretch reads HTHGG. Residues 53–73 traverse the membrane as a helical segment; that stretch reads GAFLIPYFIALVFEGIPLFYI. Topologically, residues 74-105 are cytoplasmic; it reads ELAIGQRLRRGSIGVWKTISPYLGGVGLGCFS. A helical transmembrane segment spans residues 106–126; that stretch reads VSFLVSLYYNTILLWVLWFFL. Topologically, residues 127-177 are extracellular; that stretch reads NSFQHPLPWSTCPLDLNRTGFVQECQSSGTVSYFWYRQTLNITSDISNTGT. N-linked (GlcNAc...) asparagine glycans are attached at residues N143 and N167. Residues 178–198 traverse the membrane as a helical segment; that stretch reads IQWKLFLCLVACWTTVYLCVI. Residues 199 to 206 are Cytoplasmic-facing; the sequence is RGIESTGK. The chain crosses the membrane as a helical span at residues 207–227; that stretch reads VIYFTALFPYLVLTIFLIRGL. The Extracellular portion of the chain corresponds to 228-255; it reads TLPGATEGLTYLFTPNMKILQNSRVWLD. A helical transmembrane segment spans residues 256–276; the sequence is AATQIFFSLSLAFGGHIAFAS. At 277–290 the chain is on the cytoplasmic side; it reads YNQPRNNCEKDAVT. Residues 291–311 form a helical membrane-spanning segment; sequence IALVNSMTSLYASITIFSIMG. Residues 312 to 397 are Extracellular-facing; that stretch reads FKASNDYGRC…FTEAVLHMPG (86 aa). N353 carries an N-linked (GlcNAc...) asparagine glycan. A helical membrane pass occupies residues 398-418; it reads ASVWSVLFFGMLFTLGLSSMF. Residues 419-442 are Cytoplasmic-facing; that stretch reads GNMEGVITPLFDMGILPKGVPKET. A helical membrane pass occupies residues 443-463; it reads MTGVVCFICFLSAICFTLQSG. The Extracellular portion of the chain corresponds to 464–472; it reads SYWLEIFDS. Residues 473–493 form a helical membrane-spanning segment; that stretch reads FAASLNLIIFAFMEVVGVIHV. The Cytoplasmic segment spans residues 494 to 520; it reads YGIKRFCDDIEWMTGRRPSLYWQVTWR. Residues 521-541 form a helical membrane-spanning segment; the sequence is VVSPMLLFGIFLSYIVLLAQS. Residues 542 to 571 are Extracellular-facing; the sequence is SPSYKAWNPQYEHFPSREEKLYPGWVQVTC. Residues 572–592 traverse the membrane as a helical segment; it reads VLLSFLPSLWVPGIALAQLLF. At 593–615 the chain is on the cytoplasmic side; sequence QYRQRWKNTHLESALKPQESRGC.

The protein belongs to the sodium:neurotransmitter symporter (SNF) (TC 2.A.22) family. SLC6A18 subfamily. Interacts with CLTRN; this interaction regulates the trafficking of SLC6A18 to the cell membrane and its activity. In terms of tissue distribution, kidney-specific expression.

Its subcellular location is the apical cell membrane. It localises to the cell membrane. The catalysed reaction is L-alanine(out) + chloride(out) + 2 Na(+)(out) = L-alanine(in) + chloride(in) + 2 Na(+)(in). It carries out the reaction glycine(out) + chloride(out) + 2 Na(+)(out) = glycine(in) + chloride(in) + 2 Na(+)(in). The enzyme catalyses L-methionine(out) + chloride(out) + 2 Na(+)(out) = L-methionine(in) + chloride(in) + 2 Na(+)(in). It catalyses the reaction L-valine(out) + chloride(out) + 2 Na(+)(out) = L-valine(in) + chloride(in) + 2 Na(+)(in). The catalysed reaction is L-isoleucine(out) + chloride(out) + 2 Na(+)(out) = L-isoleucine(in) + chloride(in) + 2 Na(+)(in). It carries out the reaction L-serine(out) + chloride(out) + 2 Na(+)(out) = L-serine(in) + chloride(in) + 2 Na(+)(in). The enzyme catalyses L-leucine(out) + chloride(out) + 2 Na(+)(out) = L-leucine(in) + chloride(in) + 2 Na(+)(in). Symporter that transports one amino acid molecule together with two sodium and one chloride ions in kidneys and plays a role in the neutral amino acids reabsorption. Preferentially transports neutral amino acids such as L-glycine and L-alanine but also other neutral amino acids. Required CLTRN for cell surface expression and for its amino acid transporter activity. The transport mechanism is pH-independent. This Rattus norvegicus (Rat) protein is Sodium-dependent neutral amino acid transporter B(0)AT3.